Consider the following 277-residue polypeptide: Phosphonates import ATP-binding protein PhnC 2 (277 aa).

The 249-residue stretch at 5 to 253 (IHVQGLNKTF…FLNDLYGADA (249 aa)) folds into the ABC transporter domain. Position 37–44 (37–44 (GASGSGKS)) interacts with ATP.

Belongs to the ABC transporter superfamily. Phosphonates importer (TC 3.A.1.9.1) family. The complex is composed of two ATP-binding proteins (PhnC), two transmembrane proteins (PhnE) and a solute-binding protein (PhnD).

Its subcellular location is the cell inner membrane. The catalysed reaction is phosphonate(out) + ATP + H2O = phosphonate(in) + ADP + phosphate + H(+). Part of the ABC transporter complex PhnCDE involved in phosphonates import. Responsible for energy coupling to the transport system. This chain is Phosphonates import ATP-binding protein PhnC 2, found in Pseudomonas savastanoi pv. phaseolicola (strain 1448A / Race 6) (Pseudomonas syringae pv. phaseolicola (strain 1448A / Race 6)).